The primary structure comprises 156 residues: 6,7-dimethyl-8-ribityllumazine synthase (156 aa).

Residues Phe-25, 59–61 (AFE), and 83–85 (AVI) each bind 5-amino-6-(D-ribitylamino)uracil. 88 to 89 (AT) is a (2S)-2-hydroxy-3-oxobutyl phosphate binding site. His-91 acts as the Proton donor in catalysis. Phe-116 is a binding site for 5-amino-6-(D-ribitylamino)uracil. Residue Arg-130 participates in (2S)-2-hydroxy-3-oxobutyl phosphate binding.

Belongs to the DMRL synthase family.

It catalyses the reaction (2S)-2-hydroxy-3-oxobutyl phosphate + 5-amino-6-(D-ribitylamino)uracil = 6,7-dimethyl-8-(1-D-ribityl)lumazine + phosphate + 2 H2O + H(+). It participates in cofactor biosynthesis; riboflavin biosynthesis; riboflavin from 2-hydroxy-3-oxobutyl phosphate and 5-amino-6-(D-ribitylamino)uracil: step 1/2. Functionally, catalyzes the formation of 6,7-dimethyl-8-ribityllumazine by condensation of 5-amino-6-(D-ribitylamino)uracil with 3,4-dihydroxy-2-butanone 4-phosphate. This is the penultimate step in the biosynthesis of riboflavin. The protein is 6,7-dimethyl-8-ribityllumazine synthase of Nitratidesulfovibrio vulgaris (strain ATCC 29579 / DSM 644 / CCUG 34227 / NCIMB 8303 / VKM B-1760 / Hildenborough) (Desulfovibrio vulgaris).